We begin with the raw amino-acid sequence, 460 residues long: Equilibrative nucleoside transporter 1 (460 aa).

The Cytoplasmic segment spans residues M1–K12. A helical membrane pass occupies residues A13–W29. The Extracellular segment spans residues N30–N82. N48 carries N-linked (GlcNAc...) asparagine glycosylation. A helical transmembrane segment spans residues V83 to S107. At Q108–R111 the chain is on the cytoplasmic side. The chain crosses the membrane as a helical span at residues I112–V130. Residues K131–I138 are Extracellular-facing. A helical transmembrane segment spans residues F139 to L157. At Q158–A174 the chain is on the cytoplasmic side. A helical membrane pass occupies residues P175–S199. Over E200–F206 the chain is Extracellular. The helical transmembrane segment at G207–P227 threads the bilayer. At R228–V291 the chain is on the cytoplasmic side. S254 carries the phosphoserine modification. The segment covering K255–S266 has biased composition (basic and acidic residues). The interval K255 to N277 is disordered. At S273 the chain carries Phosphoserine. The chain crosses the membrane as a helical span at residues P292–T311. The Extracellular segment spans residues A312–P323. A helical transmembrane segment spans residues W324–W342. The Cytoplasmic segment spans residues L343–R359. The chain crosses the membrane as a helical span at residues W360–C378. At N379–D397 the chain is on the extracellular side. Residues A398 to L417 traverse the membrane as a helical segment. The Cytoplasmic portion of the chain corresponds to C418 to G435. The helical transmembrane segment at N436–L456 threads the bilayer. Residues R457–V460 lie on the Extracellular side of the membrane.

The protein belongs to the SLC29A/ENT transporter (TC 2.A.57) family. Identified in a complex with STOM. Glycosylated. As to expression, highly expressed in heart, spleen, lung, liver and testis. Lower level of expression in brain and kidney. Expressed in adipose tissues, brown adipocytes expressing significantly higher amounts than white adipocytes. Expressed in seminiferous tubules.

Its subcellular location is the basolateral cell membrane. It is found in the apical cell membrane. It localises to the cell membrane. It carries out the reaction adenosine(in) = adenosine(out). The catalysed reaction is guanosine(in) = guanosine(out). It catalyses the reaction inosine(in) = inosine(out). The enzyme catalyses uridine(out) = uridine(in). It carries out the reaction thymidine(in) = thymidine(out). The catalysed reaction is cytidine(in) = cytidine(out). It catalyses the reaction adenine(out) = adenine(in). The enzyme catalyses guanine(out) = guanine(in). It carries out the reaction thymine(out) = thymine(in). The catalysed reaction is uracil(in) = uracil(out). It catalyses the reaction hypoxanthine(out) = hypoxanthine(in). Its activity is regulated as follows. Transporter activity is sensitive to low concentrations of the inhibitor nitrobenzylmercaptopurine riboside (NBMPR). Its function is as follows. Uniporter involved in the facilitative transport of nucleosides and nucleobases, and contributes to maintaining their cellular homeostasis. Functions as a Na(+)-independent transporter. Involved in the transport of nucleosides such as adenosine, guanosine, inosine, uridine, thymidine and cytidine. Also transports purine (hypoxanthine, adenine, guanine) and pyrimidine nucleobases (thymine, uracil). Mediates basolateral nucleoside uptake into Sertoli cells, thereby regulating the transport of nucleosides in testis across the blood-testis-barrier. Regulates inosine levels in brown adipocytes tissues (BAT) and extracellular inosine levels, which controls BAT-dependent energy expenditure. The polypeptide is Equilibrative nucleoside transporter 1 (Mus musculus (Mouse)).